The chain runs to 509 residues: ATP synthase subunit alpha (509 aa).

169–176 (GDRKTGKT) provides a ligand contact to ATP.

This sequence belongs to the ATPase alpha/beta chains family. F-type ATPases have 2 components, CF(1) - the catalytic core - and CF(0) - the membrane proton channel. CF(1) has five subunits: alpha(3), beta(3), gamma(1), delta(1), epsilon(1). CF(0) has three main subunits: a(1), b(2) and c(9-12). The alpha and beta chains form an alternating ring which encloses part of the gamma chain. CF(1) is attached to CF(0) by a central stalk formed by the gamma and epsilon chains, while a peripheral stalk is formed by the delta and b chains.

The protein localises to the cell membrane. The catalysed reaction is ATP + H2O + 4 H(+)(in) = ADP + phosphate + 5 H(+)(out). Its function is as follows. Produces ATP from ADP in the presence of a proton gradient across the membrane. The alpha chain is a regulatory subunit. The chain is ATP synthase subunit alpha from Limosilactobacillus reuteri (strain DSM 20016) (Lactobacillus reuteri).